We begin with the raw amino-acid sequence, 510 residues long: Bifunctional purine biosynthesis protein PurH (510 aa).

Residues 1–145 form the MGS-like domain; the sequence is MSKRALISVS…KNFEDVLVVT (145 aa).

It belongs to the PurH family.

The catalysed reaction is (6R)-10-formyltetrahydrofolate + 5-amino-1-(5-phospho-beta-D-ribosyl)imidazole-4-carboxamide = 5-formamido-1-(5-phospho-D-ribosyl)imidazole-4-carboxamide + (6S)-5,6,7,8-tetrahydrofolate. It catalyses the reaction IMP + H2O = 5-formamido-1-(5-phospho-D-ribosyl)imidazole-4-carboxamide. It participates in purine metabolism; IMP biosynthesis via de novo pathway; 5-formamido-1-(5-phospho-D-ribosyl)imidazole-4-carboxamide from 5-amino-1-(5-phospho-D-ribosyl)imidazole-4-carboxamide (10-formyl THF route): step 1/1. It functions in the pathway purine metabolism; IMP biosynthesis via de novo pathway; IMP from 5-formamido-1-(5-phospho-D-ribosyl)imidazole-4-carboxamide: step 1/1. The chain is Bifunctional purine biosynthesis protein PurH from Oceanobacillus iheyensis (strain DSM 14371 / CIP 107618 / JCM 11309 / KCTC 3954 / HTE831).